The sequence spans 549 residues: Cation/acetate symporter ActP (549 aa).

The next 13 membrane-spanning stretches (helical) occupy residues 33–53, 77–97, 103–123, 148–168, 183–203, 206–226, 262–282, 303–323, 355–375, 404–424, 428–448, 464–484, and 493–513; these read WQAIIMFLIFVVFTLGITYWA, LAIAGDYMSAASFLGISALVF, GLIYSLGFLVGWPIILFLIAE, ILSACGSLVVVALYLIAQMVG, IAVVLVGVLMMMYVLFGGMLA, WVQIIKAVLLLFGASFMAFMV, ISALSLGLGLMFGTAGLPHIL, GFMGYFYILTFIIGFGAIMLV, LFLGFISAVAFATILAVVAGL, VSKITVLILGVIAIILGVLFE, IAFMVGLAFAIAASCNFPIIL, GGWLGLITAVVLMILGPTIWV, and IFPYEYPALFSISVAFLGIWF.

This sequence belongs to the sodium:solute symporter (SSF) (TC 2.A.21) family.

The protein localises to the cell inner membrane. Its function is as follows. Transports acetate. This is Cation/acetate symporter ActP from Escherichia coli O17:K52:H18 (strain UMN026 / ExPEC).